The sequence spans 104 residues: N(4)-acetylcytidine amidohydrolase (104 aa).

Positions 7-93 (MTFFSRFEAD…EVIQEIYPGI (87 aa)) constitute an ASCH domain. Catalysis depends on lysine 22, which acts as the Proton acceptor. Threonine 25 functions as the Nucleophile in the catalytic mechanism. The active-site Proton donor is the glutamate 75.

Belongs to the N(4)-acetylcytidine amidohydrolase family.

It catalyses the reaction N(4)-acetylcytidine + H2O = cytidine + acetate + H(+). The enzyme catalyses N(4)-acetyl-2'-deoxycytidine + H2O = 2'-deoxycytidine + acetate + H(+). The catalysed reaction is N(4)-acetylcytosine + H2O = cytosine + acetate + H(+). Its function is as follows. Catalyzes the hydrolysis of N(4)-acetylcytidine (ac4C). This is N(4)-acetylcytidine amidohydrolase from Vibrio vulnificus (strain YJ016).